The primary structure comprises 379 residues: Cytochrome b (379 aa).

4 consecutive transmembrane segments (helical) span residues 33 to 53 (FGSL…FLAM), 77 to 98 (WLIR…FIHV), 113 to 133 (WNIG…GYVL), and 178 to 198 (FFAF…VHLL). Heme b is bound by residues His83 and His97. Heme b-binding residues include His182 and His196. A ubiquinone is bound at residue His201. Transmembrane regions (helical) follow at residues 226 to 246 (TKDL…VLFF), 288 to 308 (LGGV…PLLN), 320 to 340 (VTQV…WIGG), and 347 to 367 (FTTI…ILIP).

Belongs to the cytochrome b family. The cytochrome bc1 complex contains 11 subunits: 3 respiratory subunits (MT-CYB, CYC1 and UQCRFS1), 2 core proteins (UQCRC1 and UQCRC2) and 6 low-molecular weight proteins (UQCRH/QCR6, UQCRB/QCR7, UQCRQ/QCR8, UQCR10/QCR9, UQCR11/QCR10 and a cleavage product of UQCRFS1). This cytochrome bc1 complex then forms a dimer. Heme b serves as cofactor.

It localises to the mitochondrion inner membrane. Functionally, component of the ubiquinol-cytochrome c reductase complex (complex III or cytochrome b-c1 complex) that is part of the mitochondrial respiratory chain. The b-c1 complex mediates electron transfer from ubiquinol to cytochrome c. Contributes to the generation of a proton gradient across the mitochondrial membrane that is then used for ATP synthesis. This chain is Cytochrome b (MT-CYB), found in Akodon cursor (Cursor grass mouse).